The following is a 490-amino-acid chain: Bifunctional pantoate ligase/cytidylate kinase (490 aa).

1 to 8 (MGGLHQGH) is a binding site for ATP. The pantoate--beta-alanine ligase stretch occupies residues 1 to 253 (MGGLHQGHAR…CGETRLIDHV (253 aa)). Catalysis depends on His8, which acts as the Proton donor. Gln35 is a (R)-pantoate binding site. Residue Gln35 participates in beta-alanine binding. Residue 124 to 127 (GEKD) coordinates ATP. Gln130 lines the (R)-pantoate pocket. ATP is bound by residues Val153 and 161 to 164 (ASSR). A cytidylate kinase region spans residues 254-490 (FIMTRSPIVA…AKEIWPTPQG (237 aa)).

It in the N-terminal section; belongs to the pantothenate synthetase family. In the C-terminal section; belongs to the cytidylate kinase family. Type 1 subfamily.

It is found in the cytoplasm. The catalysed reaction is (R)-pantoate + beta-alanine + ATP = (R)-pantothenate + AMP + diphosphate + H(+). The enzyme catalyses CMP + ATP = CDP + ADP. It carries out the reaction dCMP + ATP = dCDP + ADP. Its pathway is cofactor biosynthesis; (R)-pantothenate biosynthesis; (R)-pantothenate from (R)-pantoate and beta-alanine: step 1/1. Its function is as follows. Catalyzes the condensation of pantoate with beta-alanine in an ATP-dependent reaction via a pantoyl-adenylate intermediate. Functionally, catalyzes the transfer of a phosphate group from ATP to either CMP or dCMP to form CDP or dCDP and ADP, respectively. The polypeptide is Bifunctional pantoate ligase/cytidylate kinase (Synechococcus sp. (strain WH7803)).